The chain runs to 551 residues: Chaperonin GroEL (551 aa).

Residues 30–33 (TLGP), lysine 51, 87–91 (DGTTT), glycine 415, 481–483 (NAA), and aspartate 497 contribute to the ATP site.

This sequence belongs to the chaperonin (HSP60) family. As to quaternary structure, forms a cylinder of 14 subunits composed of two heptameric rings stacked back-to-back. Interacts with the co-chaperonin GroES.

It is found in the cytoplasm. It carries out the reaction ATP + H2O + a folded polypeptide = ADP + phosphate + an unfolded polypeptide.. Its function is as follows. Together with its co-chaperonin GroES, plays an essential role in assisting protein folding. The GroEL-GroES system forms a nano-cage that allows encapsulation of the non-native substrate proteins and provides a physical environment optimized to promote and accelerate protein folding. The protein is Chaperonin GroEL of Magnetococcus marinus (strain ATCC BAA-1437 / JCM 17883 / MC-1).